Here is a 689-residue protein sequence, read N- to C-terminus: Glycine--tRNA ligase beta subunit (689 aa).

It belongs to the class-II aminoacyl-tRNA synthetase family. In terms of assembly, tetramer of two alpha and two beta subunits.

It is found in the cytoplasm. It catalyses the reaction tRNA(Gly) + glycine + ATP = glycyl-tRNA(Gly) + AMP + diphosphate. This chain is Glycine--tRNA ligase beta subunit, found in Yersinia enterocolitica serotype O:8 / biotype 1B (strain NCTC 13174 / 8081).